The chain runs to 1899 residues: Protein TIC 214 (1899 aa).

6 consecutive transmembrane segments (helical) span residues 23 to 43 (VVVG…SYLF), 64 to 84 (FITG…HLAL), 87 to 107 (PHTI…WNNH), 124 to 144 (LSIQ…LFIL), 172 to 192 (VGWL…LVCI), and 217 to 237 (WTAR…LGVH). 2 disordered regions span residues 256–280 (EQKK…TKKE) and 1581–1619 (PKDY…GLDL). Positions 269 to 280 (EKTFETKETKKE) are enriched in basic and acidic residues.

The protein belongs to the TIC214 family. In terms of assembly, part of the Tic complex.

The protein localises to the plastid. It is found in the chloroplast inner membrane. Its function is as follows. Involved in protein precursor import into chloroplasts. May be part of an intermediate translocation complex acting as a protein-conducting channel at the inner envelope. This is Protein TIC 214 from Ceratophyllum demersum (Rigid hornwort).